Here is a 145-residue protein sequence, read N- to C-terminus: Peptide methionine sulfoxide reductase MsrB (145 aa).

In terms of domain architecture, MsrB spans 4-127; that stretch reads SDELKQRIGD…NSAALKFIPY (124 aa). Cys-116 functions as the Nucleophile in the catalytic mechanism.

Belongs to the MsrB Met sulfoxide reductase family.

It catalyses the reaction L-methionyl-[protein] + [thioredoxin]-disulfide + H2O = L-methionyl-(R)-S-oxide-[protein] + [thioredoxin]-dithiol. The sequence is that of Peptide methionine sulfoxide reductase MsrB from Streptococcus pyogenes serotype M18 (strain MGAS8232).